The chain runs to 265 residues: Glutamate racemase (265 aa).

Substrate contacts are provided by residues 12-13 and 44-45; these read DS and YG. Residue cysteine 75 is the Proton donor/acceptor of the active site. Position 76–77 (76–77) interacts with substrate; the sequence is NT. Cysteine 186 acts as the Proton donor/acceptor in catalysis. 187-188 contributes to the substrate binding site; it reads TH.

Belongs to the aspartate/glutamate racemases family.

It carries out the reaction L-glutamate = D-glutamate. Its pathway is cell wall biogenesis; peptidoglycan biosynthesis. Functionally, provides the (R)-glutamate required for cell wall biosynthesis. In Pseudomonas paraeruginosa (strain DSM 24068 / PA7) (Pseudomonas aeruginosa (strain PA7)), this protein is Glutamate racemase.